Reading from the N-terminus, the 220-residue chain is Deoxyribose-phosphate aldolase 1 (220 aa).

D89 serves as the catalytic Proton donor/acceptor. Catalysis depends on K151, which acts as the Schiff-base intermediate with acetaldehyde. K180 serves as the catalytic Proton donor/acceptor.

This sequence belongs to the DeoC/FbaB aldolase family. DeoC type 1 subfamily.

The protein resides in the cytoplasm. The catalysed reaction is 2-deoxy-D-ribose 5-phosphate = D-glyceraldehyde 3-phosphate + acetaldehyde. Its pathway is carbohydrate degradation; 2-deoxy-D-ribose 1-phosphate degradation; D-glyceraldehyde 3-phosphate and acetaldehyde from 2-deoxy-alpha-D-ribose 1-phosphate: step 2/2. Its function is as follows. Catalyzes a reversible aldol reaction between acetaldehyde and D-glyceraldehyde 3-phosphate to generate 2-deoxy-D-ribose 5-phosphate. The chain is Deoxyribose-phosphate aldolase 1 from Staphylococcus aureus (strain MRSA252).